Reading from the N-terminus, the 389-residue chain is Na(+)/H(+) antiporter NhaA 1 (389 aa).

A run of 11 helical transmembrane segments spans residues Val-12–Val-32, Phe-62–Leu-82, Ile-97–Leu-117, Gly-128–Gly-148, Ile-157–Phe-177, Ile-184–Gly-204, Ile-220–Ile-240, Phe-260–Ser-280, Ile-282–Gly-302, Leu-331–Leu-351, and Leu-365–Phe-385.

It belongs to the NhaA Na(+)/H(+) (TC 2.A.33) antiporter family.

Its subcellular location is the cell inner membrane. It carries out the reaction Na(+)(in) + 2 H(+)(out) = Na(+)(out) + 2 H(+)(in). Functionally, na(+)/H(+) antiporter that extrudes sodium in exchange for external protons. This chain is Na(+)/H(+) antiporter NhaA 1, found in Campylobacter jejuni subsp. jejuni serotype O:6 (strain 81116 / NCTC 11828).